The following is a 492-amino-acid chain: DEAD-box ATP-dependent RNA helicase RhpA (492 aa).

The Q motif motif lies at 20-48 (PSFNDLGLKESVLKSVYEAGFTSPSPIQE). The region spanning 51 to 220 (IPAVLQGRDV…DKILENPIKI (170 aa)) is the Helicase ATP-binding domain. ATP is bound at residue 64-71 (AQTGTGKT). The DEAD box motif lies at 168 to 171 (DESD). The 163-residue stretch at 231–393 (DITQRFYVIN…EIPTINENQI (163 aa)) folds into the Helicase C-terminal domain. The segment at 445–492 (AIQNPKEKTPKPSHKKTPQHERARSFKKGQHRDRHPKTNHHSKKPKRR) is disordered. Basic residues predominate over residues 469–492 (SFKKGQHRDRHPKTNHHSKKPKRR).

Belongs to the DEAD box helicase family. Homodimer. Interacts with RNase J (rnj), might be a member of a minimal RNA degradosome complex.

It localises to the cytoplasm. It catalyses the reaction ATP + H2O = ADP + phosphate + H(+). Its function is as follows. DEAD-box RNA helicase probably involved in RNA degradation. Unwinds dsRNA in both 5'- and 3'-directions. Background RNA-dependent ATPase activity is stimulated about 5-fold by RNaseJ (rnj). Stimulates the dsRNase activity of RNase J. The protein is DEAD-box ATP-dependent RNA helicase RhpA (rhpA) of Helicobacter pylori (strain B128).